The following is a 378-amino-acid chain: Lipoyl synthase, mitochondrial (378 aa).

Cys97, Cys102, Cys108, Cys128, Cys132, Cys135, and Ser343 together coordinate [4Fe-4S] cluster. The Radical SAM core domain maps to 111–332; the sequence is GSDKSAATAT…RQRALDMGFL (222 aa).

The protein belongs to the radical SAM superfamily. Lipoyl synthase family. [4Fe-4S] cluster is required as a cofactor.

It is found in the mitochondrion. The enzyme catalyses [[Fe-S] cluster scaffold protein carrying a second [4Fe-4S](2+) cluster] + N(6)-octanoyl-L-lysyl-[protein] + 2 oxidized [2Fe-2S]-[ferredoxin] + 2 S-adenosyl-L-methionine + 4 H(+) = [[Fe-S] cluster scaffold protein] + N(6)-[(R)-dihydrolipoyl]-L-lysyl-[protein] + 4 Fe(3+) + 2 hydrogen sulfide + 2 5'-deoxyadenosine + 2 L-methionine + 2 reduced [2Fe-2S]-[ferredoxin]. The protein operates within protein modification; protein lipoylation via endogenous pathway; protein N(6)-(lipoyl)lysine from octanoyl-[acyl-carrier-protein]: step 2/2. In terms of biological role, catalyzes the radical-mediated insertion of two sulfur atoms into the C-6 and C-8 positions of the octanoyl moiety bound to the lipoyl domains of lipoate-dependent enzymes, thereby converting the octanoylated domains into lipoylated derivatives. In Phaeosphaeria nodorum (strain SN15 / ATCC MYA-4574 / FGSC 10173) (Glume blotch fungus), this protein is Lipoyl synthase, mitochondrial.